Reading from the N-terminus, the 982-residue chain is MDASSHDKPLSESKECVLNNSENDVFRLGTEPFVTPQKHVADATPNLCTPDTFKSPLDFTTVTVEQLGITPESFVKTSSGKSTSSLQKARRRSTVGVRGSPETNCLIRFIAQQRNLKKAVLSPLAREPHFEGSPRLYRNASVLRERMSAFRSAFHSIQETKMASSPSAAEADGESRISDLTRKEDLLEYQQSGFPVNSSSKRRRISSQDSPDNYLSGTKALADEACAGGASTDLAEKSPDIGSAQPGCMAAPLPELRETSQGLAVTDCVEGPVTPLSSGTATATRSPETPMCGSSSPSAKTTATRSPATPVCGSSTPSAKTFVLRSVLKKPGKLFSENGKESNLCDDGAHLISYPSNSCKEGRAGRENCKTPGCLNPRKRKRVTFGEDLSPEVFDESLPANTPLCKGGTPVRPRTVKTTSPLQSPVHEQFLQPNFDDKEENLENIEPPQGSFANLSLSKSSLSETPPGTNTCSSLNKDEEIICSIVRPTRTSQRRKQTLSSTGVCSSYTTQAEPRKEKMSRRKSREKKHTSAALPKKKQVLKSYRKKKKGKKDVEKCFYGPRDIASKKPLLSPIPELPEVSEATPLADCTQGTSSDDFNKCGQLEEVNSFEIPTQRKRRLPQKADSPELDPAHHQSQVSDKCCYLLPLTTASERGPNASTRDTGSEGNTRAESKCQSAKEPKPGTKMESGLVPRASVTQDHIVSKNPKPLGSPQSQDLFKAGQNLENPCEILIVSESMNLKCEKESECLAPQGSLQGSPVSTDSKRDLNCSEDVLIQNIKEPASHSENVGRKCAGNGSPGSGRERKWRRRTVCCGGQSSYLEQNGNPASSCSGENFVEISLESVQLIEELSNTIEQSFQRTSSKTKVRRSTRLQRDLENTGLVWLSPSPSTLQKPRRRMTICTLDSRGFECPSSKEETISSGQNPGPLPAVSGSESQGVGSSALPRKRRSLCGSTLTDANSATQPPDCKRKPSLKGESAQLP.

Residues 75–87 (VKTSSGKSTSSLQ) show a composition bias toward polar residues. Residues 75–97 (VKTSSGKSTSSLQKARRRSTVGV) are disordered. Phosphoserine is present on residues Ser100, Ser122, and Ser133. Disordered stretches follow at residues 192–216 (SGFP…NYLS) and 274–315 (TPLS…CGSS). Polar residues-rich tracts occupy residues 207 to 216 (SQDSPDNYLS) and 275 to 315 (PLSS…CGSS). A phosphoserine mark is found at Ser286, Ser296, and Ser306. Residue Thr309 is modified to Phosphothreonine. In terms of domain architecture, PP1-binding spans 379–436 (KRKRVTFGEDLSPEVFDESLPANTPLCKGGTPVRPRTVKTTSPLQSPVHEQFLQPNFD). A phosphoserine mark is found at Ser390 and Ser397. Disordered regions lie at residues 400 to 473 (ANTP…NTCS), 489 to 545 (TRTS…KSYR), 568 to 638 (KPLL…QSQV), and 651 to 716 (ASER…PQSQ). Thr402 is subject to Phosphothreonine. The residue at position 424 (Ser424) is a Phosphoserine. Composition is skewed to polar residues over residues 451 to 473 (SFAN…NTCS) and 498 to 512 (TLSS…TTQA). Positions 518–545 (KMSRRKSREKKHTSAALPKKKQVLKSYR) are enriched in basic residues. Ser572 and Ser595 each carry phosphoserine. Residues 651–668 (ASERGPNASTRDTGSEGN) are compositionally biased toward polar residues. A compositionally biased stretch (basic and acidic residues) spans 669 to 685 (TRAESKCQSAKEPKPGT). Ser735 bears the Phosphoserine mark. Lys741 participates in a covalent cross-link: Glycyl lysine isopeptide (Lys-Gly) (interchain with G-Cter in SUMO2). Positions 910–982 (ECPSSKEETI…SLKGESAQLP (73 aa)) are disordered. Ser913 is subject to Phosphoserine. Over residues 931–942 (VSGSESQGVGSS) the composition is skewed to low complexity. At Ser950 the chain carries Phosphoserine. Residues 952–964 (CGSTLTDANSATQ) show a composition bias toward polar residues. Ser973 is subject to Phosphoserine.

As to quaternary structure, interacts with PPP1CC. In terms of processing, phosphorylated by CDK1. May regulate its subcellular location.

The protein resides in the nucleus. Regulator of chromosome structure during mitosis required for condensin-depleted chromosomes to retain their compact architecture through anaphase. Acts by mediating the recruitment of phopsphatase PP1-gamma subunit (PPP1CC) to chromatin at anaphase and into the following interphase. At anaphase onset, its association with chromatin targets a pool of PPP1CC to dephosphorylate substrates. The chain is Cell division cycle-associated protein 2 (Cdca2) from Mus musculus (Mouse).